A 197-amino-acid polypeptide reads, in one-letter code: Probable GTP-binding protein EngB (197 aa).

One can recognise an EngB-type G domain in the interval 22–197 (TGVEVAFAGR…FKEKLDTWYQ (176 aa)). Residues 30-37 (GRSNAGKS), 57-61 (GRTQL), 75-78 (DLPG), 142-145 (TKAD), and 177-179 (FSS) contribute to the GTP site. Residues S37 and T59 each coordinate Mg(2+).

This sequence belongs to the TRAFAC class TrmE-Era-EngA-EngB-Septin-like GTPase superfamily. EngB GTPase family. It depends on Mg(2+) as a cofactor.

Functionally, necessary for normal cell division and for the maintenance of normal septation. The chain is Probable GTP-binding protein EngB from Francisella tularensis subsp. holarctica (strain FTNF002-00 / FTA).